The primary structure comprises 475 residues: Sulfate adenylyltransferase subunit 1 (475 aa).

A tr-type G domain is found at 24 to 240 (KSLLRFLTCG…ESAEVERELE (217 aa)). The G1 stretch occupies residues 33 to 40 (GSVDDGKS). 33 to 40 (GSVDDGKS) contributes to the GTP binding site. A G2 region spans residues 91–95 (GITID). Residues 112 to 115 (DTPG) are G3. Residues 112–116 (DTPGH) and 167–170 (NKMD) contribute to the GTP site. Residues 167–170 (NKMD) form a G4 region. The G5 stretch occupies residues 204-206 (SAL).

This sequence belongs to the TRAFAC class translation factor GTPase superfamily. Classic translation factor GTPase family. CysN/NodQ subfamily. Heterodimer composed of CysD, the smaller subunit, and CysN.

It carries out the reaction sulfate + ATP + H(+) = adenosine 5'-phosphosulfate + diphosphate. Its pathway is sulfur metabolism; hydrogen sulfide biosynthesis; sulfite from sulfate: step 1/3. Its function is as follows. With CysD forms the ATP sulfurylase (ATPS) that catalyzes the adenylation of sulfate producing adenosine 5'-phosphosulfate (APS) and diphosphate, the first enzymatic step in sulfur assimilation pathway. APS synthesis involves the formation of a high-energy phosphoric-sulfuric acid anhydride bond driven by GTP hydrolysis by CysN coupled to ATP hydrolysis by CysD. This chain is Sulfate adenylyltransferase subunit 1, found in Aeromonas hydrophila subsp. hydrophila (strain ATCC 7966 / DSM 30187 / BCRC 13018 / CCUG 14551 / JCM 1027 / KCTC 2358 / NCIMB 9240 / NCTC 8049).